Reading from the N-terminus, the 298-residue chain is Acetyl-coenzyme A carboxylase carboxyl transferase subunit beta (298 aa).

Positions V25–A295 constitute a CoA carboxyltransferase N-terminal domain. The Zn(2+) site is built by C29, C32, C48, and C51. The C4-type zinc-finger motif lies at C29–C51.

It belongs to the AccD/PCCB family. In terms of assembly, acetyl-CoA carboxylase is a heterohexamer composed of biotin carboxyl carrier protein (AccB), biotin carboxylase (AccC) and two subunits each of ACCase subunit alpha (AccA) and ACCase subunit beta (AccD). The cofactor is Zn(2+).

The protein localises to the cytoplasm. It catalyses the reaction N(6)-carboxybiotinyl-L-lysyl-[protein] + acetyl-CoA = N(6)-biotinyl-L-lysyl-[protein] + malonyl-CoA. The protein operates within lipid metabolism; malonyl-CoA biosynthesis; malonyl-CoA from acetyl-CoA: step 1/1. Its function is as follows. Component of the acetyl coenzyme A carboxylase (ACC) complex. Biotin carboxylase (BC) catalyzes the carboxylation of biotin on its carrier protein (BCCP) and then the CO(2) group is transferred by the transcarboxylase to acetyl-CoA to form malonyl-CoA. The polypeptide is Acetyl-coenzyme A carboxylase carboxyl transferase subunit beta (Herpetosiphon aurantiacus (strain ATCC 23779 / DSM 785 / 114-95)).